The primary structure comprises 281 residues: Nhr-229 coiled coil domain containing nccd-1 (281 aa).

The sequence is that of Nhr-229 coiled coil domain containing nccd-1 from Caenorhabditis elegans.